A 379-amino-acid chain; its full sequence is Spermidine/putrescine import ATP-binding protein PotA (379 aa).

An ABC transporter domain is found at 10–240 (VTIDQVSKAY…PATDFVAKFI (231 aa)). An ATP-binding site is contributed by 42–49 (GPSGCGKT).

The protein belongs to the ABC transporter superfamily. Spermidine/putrescine importer (TC 3.A.1.11.1) family. As to quaternary structure, the complex is composed of two ATP-binding proteins (PotA), two transmembrane proteins (PotB and PotC) and a solute-binding protein (PotD).

It is found in the cell inner membrane. The catalysed reaction is ATP + H2O + polyamine-[polyamine-binding protein]Side 1 = ADP + phosphate + polyamineSide 2 + [polyamine-binding protein]Side 1.. In terms of biological role, part of the ABC transporter complex PotABCD involved in spermidine/putrescine import. Responsible for energy coupling to the transport system. The polypeptide is Spermidine/putrescine import ATP-binding protein PotA (Treponema pallidum (strain Nichols)).